A 127-amino-acid chain; its full sequence is Peroxiredoxin-2 (127 aa).

The 125-residue stretch at 1–125 (LFFYPLDFTF…ALRLVQGXQY (125 aa)) folds into the Thioredoxin domain. The Cysteine sulfenic acid (-SOH) intermediate role is filled by cysteine 12. Serine 73 carries the phosphoserine modification.

The protein belongs to the peroxiredoxin family. AhpC/Prx1 subfamily. Homodimer; disulfide-linked, upon oxidation. 5 homodimers assemble to form a ring-like decamer. Interacts with TIPIN. The enzyme can be inactivated by further oxidation of the cysteine sulfenic acid (C(P)-SOH) to sulphinic acid (C(P)-SO2H) instead of its condensation to a disulfide bond. It can be reactivated by forming a transient disulfide bond with sulfiredoxin SRXN1, which reduces the cysteine sulfinic acid in an ATP- and Mg-dependent manner. In terms of processing, acetylation increases resistance to transition to high molecular-mass complexes. Deacetylated by HDAC6 which decreases reducing activity.

It localises to the cytoplasm. The enzyme catalyses a hydroperoxide + [thioredoxin]-dithiol = an alcohol + [thioredoxin]-disulfide + H2O. Thiol-specific peroxidase that catalyzes the reduction of hydrogen peroxide and organic hydroperoxides to water and alcohols, respectively. Plays a role in cell protection against oxidative stress by detoxifying peroxides and as sensor of hydrogen peroxide-mediated signaling events. Might participate in the signaling cascades of growth factors and tumor necrosis factor-alpha by regulating the intracellular concentrations of H(2)O(2). The sequence is that of Peroxiredoxin-2 (PRDX2) from Sus scrofa (Pig).